A 143-amino-acid polypeptide reads, in one-letter code: Large ribosomal subunit protein uL11 (143 aa).

It belongs to the universal ribosomal protein uL11 family. Part of the ribosomal stalk of the 50S ribosomal subunit. Interacts with L10 and the large rRNA to form the base of the stalk. L10 forms an elongated spine to which L12 dimers bind in a sequential fashion forming a multimeric L10(L12)X complex. Post-translationally, one or more lysine residues are methylated.

In terms of biological role, forms part of the ribosomal stalk which helps the ribosome interact with GTP-bound translation factors. The chain is Large ribosomal subunit protein uL11 from Pseudomonas entomophila (strain L48).